The primary structure comprises 668 residues: Probable 6-phosphofructo-2-kinase PB17E12.14c (668 aa).

Positions 1–14 (MSNNNNKDDSELQS) are enriched in basic and acidic residues. Disordered regions lie at residues 1 to 105 (MSNN…GSRP) and 136 to 185 (HRVP…EATN). 3 stretches are compositionally biased toward polar residues: residues 46–56 (NDHSFTNTDSV), 65–86 (SPVSTLTSNSANFSDSSLQNSP), and 164–184 (SSMSIPGQTSIVSSNNGSEAT). 197-204 (GLPARGKS) contributes to the ATP binding site. Active-site residues include D281 and C312. R346 serves as a coordination point for beta-D-fructose 6-phosphate. Residue E540 is part of the active site. H608 functions as the Proton donor in the catalytic mechanism.

It carries out the reaction beta-D-fructose 6-phosphate + ATP = beta-D-fructose 2,6-bisphosphate + ADP + H(+). In terms of biological role, synthesis of fructose 2,6-bisphosphate. In Schizosaccharomyces pombe (strain 972 / ATCC 24843) (Fission yeast), this protein is Probable 6-phosphofructo-2-kinase PB17E12.14c.